The sequence spans 225 residues: Ribonuclease 3 (225 aa).

The RNase III domain occupies 7-129 (IPRLCRTLGY…IIGAVYLDSD (123 aa)). E42 contacts Mg(2+). The active site involves D46. D115 and E118 together coordinate Mg(2+). E118 is a catalytic residue. Residues 155–225 (DPKTLLQELL…AAQALELIKR (71 aa)) form the DRBM domain.

Belongs to the ribonuclease III family. As to quaternary structure, homodimer. The cofactor is Mg(2+).

Its subcellular location is the cytoplasm. It carries out the reaction Endonucleolytic cleavage to 5'-phosphomonoester.. Functionally, digests double-stranded RNA. Involved in the processing of primary rRNA transcript to yield the immediate precursors to the large and small rRNAs (23S and 16S). Processes some mRNAs, and tRNAs when they are encoded in the rRNA operon. Processes pre-crRNA and tracrRNA of type II CRISPR loci if present in the organism. The chain is Ribonuclease 3 from Shewanella woodyi (strain ATCC 51908 / MS32).